The primary structure comprises 347 residues: Photosystem II protein D1 (347 aa).

Transmembrane regions (helical) follow at residues 31-48 (YIGW…LAII), 120-135 (HFIG…EWEF), and 144-158 (WIYL…AATA). A chlorophyll a-binding site is contributed by histidine 120. Tryptophan 128 serves as a coordination point for pheophytin a. Residues aspartate 172 and glutamate 191 each coordinate [CaMn4O5] cluster. The chain crosses the membrane as a helical span at residues 199-220 (FHILGVAGVFGGSLFSAMHGSL). Histidine 200 serves as a coordination point for chlorophyll a. Residues histidine 217 and 266-267 (SF) contribute to the a quinone site. Histidine 217 contributes to the Fe cation binding site. A Fe cation-binding site is contributed by histidine 274. The chain crosses the membrane as a helical span at residues 276 to 290 (FLAAWPVIGIWFTAL). 3 residues coordinate [CaMn4O5] cluster: histidine 334, glutamate 335, and aspartate 344.

Belongs to the reaction center PufL/M/PsbA/D family. PSII is composed of 1 copy each of membrane proteins PsbA, PsbB, PsbC, PsbD, PsbE, PsbF, PsbH, PsbI, PsbJ, PsbK, PsbL, PsbM, PsbT, PsbX, PsbY, PsbZ, Psb30/Ycf12, at least 3 peripheral proteins of the oxygen-evolving complex and a large number of cofactors. It forms dimeric complexes. Requires The D1/D2 heterodimer binds P680, chlorophylls that are the primary electron donor of PSII, and subsequent electron acceptors. It shares a non-heme iron and each subunit binds pheophytin, quinone, additional chlorophylls, carotenoids and lipids. D1 provides most of the ligands for the Mn4-Ca-O5 cluster of the oxygen-evolving complex (OEC). There is also a Cl(-1) ion associated with D1 and D2, which is required for oxygen evolution. The PSII complex binds additional chlorophylls, carotenoids and specific lipids. as cofactor. Tyr-163 forms a radical intermediate that is referred to as redox-active TyrZ, YZ or Y-Z.

Its subcellular location is the plastid. The protein resides in the chloroplast thylakoid membrane. The catalysed reaction is 2 a plastoquinone + 4 hnu + 2 H2O = 2 a plastoquinol + O2. Its function is as follows. Photosystem II (PSII) is a light-driven water:plastoquinone oxidoreductase that uses light energy to abstract electrons from H(2)O, generating O(2) and a proton gradient subsequently used for ATP formation. It consists of a core antenna complex that captures photons, and an electron transfer chain that converts photonic excitation into a charge separation. The D1/D2 (PsbA/PsbD) reaction center heterodimer binds P680, the primary electron donor of PSII as well as several subsequent electron acceptors. In Alexandrium tamarense (Red tide dinoflagellate), this protein is Photosystem II protein D1.